The sequence spans 348 residues: Rhodopsin (348 aa).

Residue Met-1 is modified to N-acetylmethionine. The Extracellular segment spans residues 1–36; that stretch reads MNGTEGPNFYVPFSNITGVVRSPFEQPQYYLAEPWQ. N-linked (GlcNAc...) asparagine glycosylation is found at Asn-2 and Asn-15. The chain crosses the membrane as a helical span at residues 37–61; that stretch reads FSMLAAYMFLLIVLGFPINFLTLYV. The Cytoplasmic segment spans residues 62–73; sequence TVQHKKLRTPLN. A helical membrane pass occupies residues 74–96; sequence YILLNLAVADLFMVFGGFTTTLY. Over 97–110 the chain is Extracellular; it reads TSLHGYFVFGPTGC. The cysteines at positions 110 and 187 are disulfide-linked. A helical transmembrane segment spans residues 111–133; the sequence is NLEGFFATLGGEIGLWSLVVLAI. Residues 134–136 carry the 'Ionic lock' involved in activated form stabilization motif; sequence ERY. At 134–152 the chain is on the cytoplasmic side; it reads ERYVVVCKPMSNFRFGENH. A helical membrane pass occupies residues 153–173; that stretch reads AIMGVAFTWVMALACAAPPLV. Residues 174-202 are Extracellular-facing; the sequence is GWSRYIPEGMQCSCGIDYYTLKPEVNNES. Glu-201 serves as a coordination point for Zn(2+). A helical transmembrane segment spans residues 203-224; that stretch reads FVIYMFVVHFTIPMIVIFFCYG. The Cytoplasmic segment spans residues 225–252; the sequence is QLVFTVKEAAAQQQESATTQKAEKEVTR. Residues 253–274 traverse the membrane as a helical segment; that stretch reads MVIIMVIFFLICWLPYASVAMY. Topologically, residues 275 to 286 are extracellular; the sequence is IFTHQGSNFGPI. Zn(2+) is bound at residue Gln-279. A helical membrane pass occupies residues 287 to 308; it reads FMTLPAFFAKTASIYNPIIYIM. N6-(retinylidene)lysine is present on Lys-296. At 309 to 348 the chain is on the cytoplasmic side; that stretch reads MNKQFRNCMLTSLCCGKNPLGDDEASATASKTETSQVAPA. Residues Cys-322 and Cys-323 are each lipidated (S-palmitoyl cysteine). The interval 330 to 348 is interaction with SAG; it reads DDEASATASKTETSQVAPA. A Phosphoserine modification is found at Ser-334. Thr-336 carries the phosphothreonine modification. Residue Ser-338 is modified to Phosphoserine. A phosphothreonine mark is found at Thr-340 and Thr-342. Ser-343 is modified (phosphoserine).

The protein belongs to the G-protein coupled receptor 1 family. Opsin subfamily. In terms of assembly, homodimer. May form a complex composed of RHO, GRK1 and RCVRN in a Ca(2+)-dependent manner; RCVRN prevents the interaction between GRK1 and RHO. Interacts with GRK1. Interacts (phosphorylated form) with SAG. Interacts with GNAT1. Interacts with GNAT3. SAG and G-proteins compete for a common binding site. Interacts with PRCD; the interaction promotes PRCD stability. Forms a complex with ASAP1 and ARF4. Forms a complex with ASAP1, RAB11A, Rabin8/RAB3IP, ARF4 and RAB11FIP3; the complex regulates Golgi-to-cilia rhodopsin/RHO transport in photoreceptors. In terms of processing, phosphorylated on some or all of the serine and threonine residues present in the C-terminal region. Contains one covalently linked retinal chromophore. Upon light absorption, the covalently bound 11-cis-retinal is converted to all-trans-retinal. After hydrolysis of the Schiff base and release of the covalently bound all-trans-retinal, active rhodopsin is regenerated by binding of a fresh molecule of 11-cis-retinal.

The protein resides in the membrane. Its subcellular location is the cell projection. The protein localises to the cilium. It is found in the photoreceptor outer segment. In terms of biological role, photoreceptor required for image-forming vision at low light intensity. Required for photoreceptor cell viability after birth. Light-induced isomerization of 11-cis to all-trans retinal triggers a conformational change that activates signaling via G-proteins. Subsequent receptor phosphorylation mediates displacement of the bound G-protein alpha subunit by the arrestin SAG and terminates signaling. This is Rhodopsin (Rho) from Rattus norvegicus (Rat).